The following is a 50-amino-acid chain: Ampulexin 1 (50 aa).

An N-terminal signal peptide occupies residues Met1 to Pro26.

As to quaternary structure, monomer. Expressed in venom sac and, to a lesser extent, in venom gland. Not expressed in brain.

Its subcellular location is the secreted. Amphipathic peptide which probably adopts an alpha-helical structure. When injected in subesophageal ganglia of cockroach P.americana, a natural host for larvae of A.compressa, dampens the escape response for about 1 hour which may contribute to early stages of hypokinesia. Has no antimicrobial activity against E.coli DH5alpha or B.thuringiensis. Is not cytotoxic in vitro. In Ampulex compressa (Emerald cockroach wasp), this protein is Ampulexin 1.